The chain runs to 138 residues: uncharacterized protein (138 aa).

The interval 1–27 (MEGELIENNGLDIYDTSETPKKRGRPA) is disordered.

This is an uncharacterized protein from Escherichia coli (strain K12).